The chain runs to 209 residues: Glutathione S-transferase F7 (209 aa).

Positions 2–83 (AGIKVFGHPA…YIAHFYSDKG (82 aa)) constitute a GST N-terminal domain. Residues 12–13 (ST), 41–42 (HK), 54–55 (KV), and 67–68 (ES) contribute to the glutathione site. Residues 90–209 (GSKDIAGIAM…TSRPSAKKVL (120 aa)) enclose the GST C-terminal domain.

The protein belongs to the GST superfamily. Phi family.

It is found in the cytoplasm. The protein resides in the cytosol. It catalyses the reaction RX + glutathione = an S-substituted glutathione + a halide anion + H(+). Its function is as follows. May be involved in the conjugation of reduced glutathione to a wide number of exogenous and endogenous hydrophobic electrophiles and have a detoxification role against certain herbicides. The protein is Glutathione S-transferase F7 of Arabidopsis thaliana (Mouse-ear cress).